Here is a 445-residue protein sequence, read N- to C-terminus: MSDVELVLRSTRVITPEGTRPAAVAVAAGKITAVLPHDAEVPAGARLEDLGDDVLLPGLVDTHVHVNDPGRTHWEGFWTATRAAAAGGITTLVDMPLNSLPPTTTVGNLRTKRDVAADKAHIDVGFWGGALPDNVKDLRPLHDAGVFGFKAFLSPSGVDEFPELDQERLARSMAEIAGFGGLLIVHAEDPHHLAAAPQRGGPRYTDFLASRPRDAEDTAIANLLAQAKRLNARVHVLHLSSSDALPLIAGAKAEGVRVTVETCPHYLTLTAEEVPDGASEFKCCPPIREAANQDLLWQALADGTIDCVVTDHSPSTADLKTDDFATAWGGISGLQLSLPAIWTEARRRGHSLEDVVRWMSARTARLVGLAQKGAIEAGRDADFAVLAPDETFTVDPAALQHRNRVTAYAGKTLSGVVKSTWLRGERIMADGEFTEPKGRLLSREP.

Residues H63, H65, K150, H186, H238, and D311 each coordinate Zn(2+). At K150 the chain carries N6-carboxylysine.

The protein belongs to the metallo-dependent hydrolases superfamily. Allantoinase family. In terms of assembly, homotetramer. Requires Zn(2+) as cofactor. Carboxylation allows a single lysine to coordinate two zinc ions.

It carries out the reaction (S)-allantoin + H2O = allantoate + H(+). It functions in the pathway nitrogen metabolism; (S)-allantoin degradation; allantoate from (S)-allantoin: step 1/1. In terms of biological role, catalyzes the conversion of allantoin (5-ureidohydantoin) to allantoic acid by hydrolytic cleavage of the five-member hydantoin ring. The chain is Allantoinase from Streptomyces avermitilis (strain ATCC 31267 / DSM 46492 / JCM 5070 / NBRC 14893 / NCIMB 12804 / NRRL 8165 / MA-4680).